The primary structure comprises 234 residues: Protein CIST1 (234 aa).

An N-terminal signal peptide occupies residues 1–24 (MACPQLPPLLLLVLVVLLKAGVNY). At 25-180 (NTPFTDIVTS…GPRELHRNPS (156 aa)) the chain is on the extracellular side. Positions 41 to 121 (SPVSSLISSP…THPSSGSPSA (81 aa)) are enriched in polar residues. The segment at 41–174 (SPVSSLISSP…PAPGDTGPRE (134 aa)) is disordered. Residues 122–140 (ELTPSSHSTLPSSESLTPH) are compositionally biased toward low complexity. Positions 141–159 (WSPTSHSPGTEPLTSTDQT) are enriched in polar residues. A helical transmembrane segment spans residues 181–201 (VVVVVCLLVSLLLIGSVVMAV). At 202-234 (RFCHRNESKFENLDEVSMGSVNDRLSFAHHLQE) the chain is on the cytoplasmic side.

It localises to the membrane. This chain is Protein CIST1, found in Homo sapiens (Human).